The following is a 230-amino-acid chain: ATP phosphoribosyltransferase (230 aa).

This sequence belongs to the ATP phosphoribosyltransferase family. Short subfamily. Heteromultimer composed of HisG and HisZ subunits.

The protein resides in the cytoplasm. The catalysed reaction is 1-(5-phospho-beta-D-ribosyl)-ATP + diphosphate = 5-phospho-alpha-D-ribose 1-diphosphate + ATP. It participates in amino-acid biosynthesis; L-histidine biosynthesis; L-histidine from 5-phospho-alpha-D-ribose 1-diphosphate: step 1/9. Functionally, catalyzes the condensation of ATP and 5-phosphoribose 1-diphosphate to form N'-(5'-phosphoribosyl)-ATP (PR-ATP). Has a crucial role in the pathway because the rate of histidine biosynthesis seems to be controlled primarily by regulation of HisG enzymatic activity. The protein is ATP phosphoribosyltransferase of Agrobacterium fabrum (strain C58 / ATCC 33970) (Agrobacterium tumefaciens (strain C58)).